The following is a 112-amino-acid chain: Integration host factor subunit alpha (112 aa).

This sequence belongs to the bacterial histone-like protein family. As to quaternary structure, heterodimer of an alpha and a beta chain.

This protein is one of the two subunits of integration host factor, a specific DNA-binding protein that functions in genetic recombination as well as in transcriptional and translational control. This chain is Integration host factor subunit alpha, found in Sinorhizobium fredii (strain NBRC 101917 / NGR234).